Here is a 501-residue protein sequence, read N- to C-terminus: L-lysine transport protein (501 aa).

Transmembrane regions (helical) follow at residues 25–41 (LIALIIGSTVGAGIFSI), 52–76 (GAMLIGWLIAGVGMLSVAFVFHVLA), 92–113 (VGLGDYVGFSSAWGYWLGSVIA), 138–155 (FVSALAVSALTWLVFGVV), 174–191 (ILPLLCFIILVAFLGFSW), 214–232 (GIMVYTVWVFIGIEGASVY), 247–269 (VIGFVAVLLLLVSISSLSFGVLT), 292–316 (WGAALISLGLCLSVLGAYVSWQMLC), 340–362 (GAAWMAQLISTIVIQIFIIIFFL), 377–393 (LYLVPYLFSAFYLVMLA), 424–440 (LIVGLVATVYSVWLFYA), 447–463 (LFGAMAMLPGLIPYVWT), and 477–495 (IGVVVVLVVAASAGVIGLV).

This sequence belongs to the amino acid-polyamine-organocation (APC) superfamily. Basic amino acid/polyamine antiporter (APA) (TC 2.A.3.2) family.

The protein resides in the cell membrane. Permease that is involved in the transport across the membrane of lysine. This chain is L-lysine transport protein (lysI), found in Corynebacterium glutamicum (strain ATCC 13032 / DSM 20300 / JCM 1318 / BCRC 11384 / CCUG 27702 / LMG 3730 / NBRC 12168 / NCIMB 10025 / NRRL B-2784 / 534).